A 428-amino-acid polypeptide reads, in one-letter code: Adenylosuccinate synthetase (428 aa).

Residues 12–18 and 40–42 contribute to the GTP site; these read GDEGKGK and GHT. Asp13 functions as the Proton acceptor in the catalytic mechanism. Residues Asp13 and Gly40 each coordinate Mg(2+). IMP contacts are provided by residues 13-16, 38-41, Thr128, Arg142, Gln223, Thr238, and Arg302; these read DEGK and NAGH. The active-site Proton donor is the His41. Substrate is bound at residue 298–304; that stretch reads VTTGRPR. Residues Arg304, 330–332, and 412–414 contribute to the GTP site; these read KLD and GTG.

Belongs to the adenylosuccinate synthetase family. In terms of assembly, homodimer. Mg(2+) is required as a cofactor.

It is found in the cytoplasm. The enzyme catalyses IMP + L-aspartate + GTP = N(6)-(1,2-dicarboxyethyl)-AMP + GDP + phosphate + 2 H(+). The protein operates within purine metabolism; AMP biosynthesis via de novo pathway; AMP from IMP: step 1/2. Plays an important role in the de novo pathway of purine nucleotide biosynthesis. Catalyzes the first committed step in the biosynthesis of AMP from IMP. The chain is Adenylosuccinate synthetase from Bifidobacterium animalis subsp. lactis (strain AD011).